The sequence spans 257 residues: MSWSAAQYAKFEDERTRPARDLLAQVPDLPAGPAFDLGCGPGNSTELILARFPGSPLTGIDSDDDMLSAARTRLPDLRFERGDLAAWTPPAESALFFANAVFQWLPEHVTLFERLILALAPGGTLAVQMPDNLDEPTHLLMEETAEESAFAPAFAGRTIRRRSLPSPATYVERLASKEVRVDVWHTVYYHQLANANAIVEWVKGTGLRPYLDALPTTQRAGYLAAYAEKIRKAYPAMKNGRVLLRFPRLFIVATRNL.

This sequence belongs to the methyltransferase superfamily. Tam family.

It is found in the cytoplasm. The enzyme catalyses trans-aconitate + S-adenosyl-L-methionine = (E)-3-(methoxycarbonyl)pent-2-enedioate + S-adenosyl-L-homocysteine. Its function is as follows. Catalyzes the S-adenosylmethionine monomethyl esterification of trans-aconitate. The polypeptide is Trans-aconitate 2-methyltransferase (Rhizobium meliloti (strain 1021) (Ensifer meliloti)).